Here is an 81-residue protein sequence, read N- to C-terminus: Photosystem I iron-sulfur center (81 aa).

2 4Fe-4S ferredoxin-type domains span residues 2–31 and 39–68; these read SHSV…MIPW and IASA…VRVY. [4Fe-4S] cluster contacts are provided by C11, C14, C17, C21, C48, C51, C54, and C58.

The eukaryotic PSI reaction center is composed of at least 11 subunits. Requires [4Fe-4S] cluster as cofactor.

Its subcellular location is the plastid. The protein localises to the chloroplast thylakoid membrane. The catalysed reaction is reduced [plastocyanin] + hnu + oxidized [2Fe-2S]-[ferredoxin] = oxidized [plastocyanin] + reduced [2Fe-2S]-[ferredoxin]. Apoprotein for the two 4Fe-4S centers FA and FB of photosystem I (PSI); essential for photochemical activity. FB is the terminal electron acceptor of PSI, donating electrons to ferredoxin. The C-terminus interacts with PsaA/B/D and helps assemble the protein into the PSI complex. Required for binding of PsaD and PsaE to PSI. PSI is a plastocyanin-ferredoxin oxidoreductase, converting photonic excitation into a charge separation, which transfers an electron from the donor P700 chlorophyll pair to the spectroscopically characterized acceptors A0, A1, FX, FA and FB in turn. The sequence is that of Photosystem I iron-sulfur center from Helianthus annuus (Common sunflower).